The primary structure comprises 785 residues: 5-methyltetrahydropteroyltriglutamate--homocysteine methyltransferase (785 aa).

5-methyltetrahydropteroyltri-L-glutamate is bound by residues 15–18 and lysine 121; that span reads RELK. Residues 460–462 and glutamate 513 contribute to the L-homocysteine site; that span reads IGS. Residues 460–462 and glutamate 513 contribute to the L-methionine site; that span reads IGS. 5-methyltetrahydropteroyltri-L-glutamate-binding positions include 544 to 545 and tryptophan 590; that span reads RC. Residue aspartate 628 coordinates L-homocysteine. Aspartate 628 is a binding site for L-methionine. Glutamate 634 provides a ligand contact to 5-methyltetrahydropteroyltri-L-glutamate. Zn(2+)-binding residues include histidine 670, cysteine 672, and glutamate 694. Histidine 723 acts as the Proton donor in catalysis. Cysteine 755 is a binding site for Zn(2+).

It belongs to the vitamin-B12 independent methionine synthase family. The cofactor is Zn(2+).

It carries out the reaction 5-methyltetrahydropteroyltri-L-glutamate + L-homocysteine = tetrahydropteroyltri-L-glutamate + L-methionine. It functions in the pathway amino-acid biosynthesis; L-methionine biosynthesis via de novo pathway; L-methionine from L-homocysteine (MetE route): step 1/1. Functionally, catalyzes the transfer of a methyl group from 5-methyltetrahydrofolate to homocysteine resulting in methionine formation. This Nitratidesulfovibrio vulgaris (strain ATCC 29579 / DSM 644 / CCUG 34227 / NCIMB 8303 / VKM B-1760 / Hildenborough) (Desulfovibrio vulgaris) protein is 5-methyltetrahydropteroyltriglutamate--homocysteine methyltransferase.